We begin with the raw amino-acid sequence, 1403 residues long: Perilipin-4 (1403 aa).

The tract at residues 1 to 21 is disordered; that stretch reads MSASGDGTRVPPKSKGKTLSS. Phosphoserine occurs at positions 25 and 31. Positions 33–70 are disordered; it reads RNLVSHTHSSTSTKDLQTATDPSGTPAPSSKVSTNSQM. Repeat copies occupy residues 104–136, 137–169, 170–202, 203–235, 236–268, 269–301, 302–334, 335–367, 368–400, 401–433, 434–466, 467–499, 500–532, 533–565, 566–598, 599–631, 632–664, 665–697, 698–730, 731–763, 764–796, 797–829, 830–862, 863–895, 896–928, 929–961, 962–994, 995–1027, and 1028–1060. The 29 X 33 AA approximate tandem repeat stretch occupies residues 104 to 1060; that stretch reads GVFGIMDAAK…VTSAMNMAKG (957 aa). Residue S1281 is modified to Phosphoserine. Residue T1287 is modified to Phosphothreonine.

This sequence belongs to the perilipin family. As to expression, specifically expressed in white adipose tissue and also weakly detected in heart and skeletal muscle (at protein level).

The protein resides in the cell membrane. It is found in the cytoplasm. It localises to the lipid droplet. Functionally, may play a role in triacylglycerol packaging into adipocytes. May function as a coat protein involved in the biogenesis of lipid droplets. The protein is Perilipin-4 (Plin4) of Mus musculus (Mouse).